A 224-amino-acid chain; its full sequence is Putative tyrosine-protein phosphatase OCA6 (224 aa).

At Thr2 the chain carries Phosphothreonine. The 163-residue stretch at 8 to 170 folds into the Tyrosine-protein phosphatase domain; it reads QFSTVQPNLY…FNSEIEVDDL (163 aa). Catalysis depends on Cys114, which acts as the Phosphocysteine intermediate.

The protein belongs to the protein-tyrosine phosphatase family.

Its subcellular location is the cytoplasm. It carries out the reaction O-phospho-L-tyrosyl-[protein] + H2O = L-tyrosyl-[protein] + phosphate. In terms of biological role, required for replication of Brome mosaic virus (BMV). This chain is Putative tyrosine-protein phosphatase OCA6 (OCA6), found in Saccharomyces cerevisiae (strain ATCC 204508 / S288c) (Baker's yeast).